Consider the following 530-residue polypeptide: Cytochrome P450 78A6 (530 aa).

A helical membrane pass occupies residues L25–T45. C474 lines the heme pocket.

Belongs to the cytochrome P450 family. Heme is required as a cofactor. Expressed in leaves, sepals, petals, stamens, carpels and developing ovules.

It is found in the membrane. Functionally, plays a role in seed and fruit development. Functions probably in association with CYP78A9 in the regulation of seed growth. Acts maternally to promote seed growth. In Arabidopsis thaliana (Mouse-ear cress), this protein is Cytochrome P450 78A6 (CYP78A6).